Consider the following 278-residue polypeptide: Pca operon regulatory protein (278 aa).

One can recognise an HTH iclR-type domain in the interval 31–91 (VAGISKGMAI…SDGHYFYLTP (61 aa)). Residues 53–72 (ITMAAEKTGMTRAAARRHLL) constitute a DNA-binding region (H-T-H motif). Positions 106–278 (LPKISQPLLN…ETARELRNIL (173 aa)) constitute an IclR-ED domain.

Activates transcription of the pca operon. This Acinetobacter baylyi (strain ATCC 33305 / BD413 / ADP1) protein is Pca operon regulatory protein (pcaU).